Consider the following 133-residue polypeptide: ATP synthase epsilon chain (133 aa).

The protein belongs to the ATPase epsilon chain family. F-type ATPases have 2 components, CF(1) - the catalytic core - and CF(0) - the membrane proton channel. CF(1) has five subunits: alpha(3), beta(3), gamma(1), delta(1), epsilon(1). CF(0) has three main subunits: a, b and c.

It is found in the cell membrane. In terms of biological role, produces ATP from ADP in the presence of a proton gradient across the membrane. The sequence is that of ATP synthase epsilon chain from Geobacillus thermodenitrificans (strain NG80-2).